Consider the following 214-residue polypeptide: uncharacterized protein (214 aa).

Residues 1 to 49 (MATRGAVAAAASTIWKHRRNPSLRSLSRHFNPNFNHRIIPTGFKYQVRA) constitute a chloroplast transit peptide.

It localises to the plastid. It is found in the chloroplast. This is an uncharacterized protein from Arabidopsis thaliana (Mouse-ear cress).